Here is a 166-residue protein sequence, read N- to C-terminus: Thioredoxin, mitochondrial (166 aa).

A mitochondrion-targeting transit peptide spans 1-59 (MAQRLLLRRFLTSVISRKPPQGVWASLTSTSLQTPPYNAGGLTGTPSPARTFHTTRVCS). One can recognise a Thioredoxin domain in the interval 61–166 (TFNVQDGPDF…LEAFLKKLIG (106 aa)). Residues Cys90 and Cys93 each act as nucleophile in the active site. The cysteines at positions 90 and 93 are disulfide-linked. N6-acetyllysine; alternate is present on Lys152. Lys152 carries the post-translational modification N6-succinyllysine; alternate.

The protein belongs to the thioredoxin family. As to quaternary structure, monomer. As to expression, expressed in several tissues with the highest expression levels in heart, muscle, kidney and adrenal gland.

The protein localises to the mitochondrion. Important for the control of mitochondrial reactive oxygen species homeostasis, apoptosis regulation and cell viability. Is involved in various redox reactions including the reduction of protein disulfide bonds, through the reversible oxidation of its active center dithiol to a disulfide. In Rattus norvegicus (Rat), this protein is Thioredoxin, mitochondrial (Txn2).